A 551-amino-acid polypeptide reads, in one-letter code: MGSETITQGFKRAPHRSLLYALGLDEKELEKPIIGIASSYSEIIPGHKHLDKIAEAVKYGVYSAGGTPVIFSTIGVCDGIAMGHSGMKYSLASREIIADSVETVVRAHQFDGLVLVPNCDKIVPGMLMAAARLDIPAIVVSGGPMLAGDYQGKSLDLHNVFEAVGEVKAGKITEGELENIEKAACPGCGSCAGMFTANSMNCLTEVLGMALPGNGTIPAVYAERIRLAKKSGRQIINLVEKNIKPSDIMTREAFKNAICVDMALGCSTNTALHLPAIAHEAGLDLELDLFNDISRKVPHICSLTPAGIYHIEDLYRVGGIPAVMKELSEKDLIQLDQLTVTGDTVGTNISRVGYIDHKIIRPVSNPYHNQGGLAVLKGNIAPGGSVVKQAAVADSMMVHRGPARVFKGEEEAVDAIINGQISEGDVVVITYEGPRGGPGMREMLTPTSALAGLGLDDKVALITDGRFSGATRGAAIGHVSPEAASGGPIGIIQDGDIIEIDIPAKSLNVDISEEEFEKRMSNFNPELPDISGYLGRYAKHVSSASTGAVLE.

Mg(2+) is bound at residue D78. C119 contacts [2Fe-2S] cluster. Mg(2+) is bound by residues D120 and K121. K121 carries the post-translational modification N6-carboxylysine. Residue C191 participates in [2Fe-2S] cluster binding. Mg(2+) is bound at residue E442. S468 acts as the Proton acceptor in catalysis.

The protein belongs to the IlvD/Edd family. As to quaternary structure, homodimer. The cofactor is [2Fe-2S] cluster. Mg(2+) is required as a cofactor.

It catalyses the reaction (2R)-2,3-dihydroxy-3-methylbutanoate = 3-methyl-2-oxobutanoate + H2O. The enzyme catalyses (2R,3R)-2,3-dihydroxy-3-methylpentanoate = (S)-3-methyl-2-oxopentanoate + H2O. It participates in amino-acid biosynthesis; L-isoleucine biosynthesis; L-isoleucine from 2-oxobutanoate: step 3/4. The protein operates within amino-acid biosynthesis; L-valine biosynthesis; L-valine from pyruvate: step 3/4. Functions in the biosynthesis of branched-chain amino acids. Catalyzes the dehydration of (2R,3R)-2,3-dihydroxy-3-methylpentanoate (2,3-dihydroxy-3-methylvalerate) into 2-oxo-3-methylpentanoate (2-oxo-3-methylvalerate) and of (2R)-2,3-dihydroxy-3-methylbutanoate (2,3-dihydroxyisovalerate) into 2-oxo-3-methylbutanoate (2-oxoisovalerate), the penultimate precursor to L-isoleucine and L-valine, respectively. The protein is Dihydroxy-acid dehydratase of Halothermothrix orenii (strain H 168 / OCM 544 / DSM 9562).